Consider the following 441-residue polypeptide: Carbohydrate sulfotransferase 3 (441 aa).

Topologically, residues methionine 1 to arginine 4 are cytoplasmic. Residues serine 5–glutamate 21 traverse the membrane as a helical; Signal-anchor for type II membrane protein segment. The Lumenal portion of the chain corresponds to lysine 22 to threonine 441. N-linked (GlcNAc...) asparagine glycosylation is found at asparagine 47 and asparagine 58. Threonine 106–phenylalanine 112 is a binding site for 3'-phosphoadenylyl sulfate. Asparagine 221 carries N-linked (GlcNAc...) asparagine glycosylation. Arginine 266–serine 274 is a 3'-phosphoadenylyl sulfate binding site. Residue asparagine 427 is glycosylated (N-linked (GlcNAc...) asparagine).

The protein belongs to the sulfotransferase 1 family. Gal/GlcNAc/GalNAc subfamily. N-glycosylated. In electric organ, it is moderately expressed in spinal cord and electric lobe and undetectable in non-neural tissues. Expressed in a punctate distribution in the innervated portion of electrocytes. In the CNS, it is localized within the somas of motor neurons and neurons of the electromotor nucleus.

The protein resides in the golgi apparatus membrane. The catalysed reaction is chondroitin beta-D-glucuronate + n 3'-phosphoadenylyl sulfate = chondroitin 6'-sulfate + n adenosine 3',5'-bisphosphate + n H(+). The enzyme catalyses 3'-phosphoadenylyl sulfate + keratan = adenosine 3',5'-bisphosphate + keratan 6'-sulfate.. Functionally, sulfotransferase that utilizes 3'-phospho-5'-adenylyl sulfate (PAPS) as sulfonate donor to catalyze the transfer of sulfate to position 6 of the N-acetylgalactosamine (GalNAc) residue of chondroitin. Chondroitin sulfate constitutes the predominant proteoglycan present in cartilage and is distributed on the surfaces of many cells and extracellular matrices. Catalyzes with a lower efficiency the sulfation of Gal residues of keratan sulfate, another glycosaminoglycan. Can also catalyze the sulfation of the Gal residues in sialyl N-acetyllactosamine (sialyl LacNAc) oligosaccharides. The chain is Carbohydrate sulfotransferase 3 (CHST3) from Tetronarce californica (Pacific electric ray).